The primary structure comprises 413 residues: Serine/threonine transporter SstT (413 aa).

Helical transmembrane passes span 21 to 41 (IGLL…SALG), 61 to 81 (SVAP…KKVG), 89 to 109 (IIYL…FASF), 146 to 166 (ITAL…GLGI), 189 to 209 (IVHF…ASTL), 224 to 244 (LAVL…IIVF), 305 to 325 (MGGA…TLGI), 337 to 357 (LVAS…LLLI), and 363 to 383 (LFGI…IIGV).

It belongs to the dicarboxylate/amino acid:cation symporter (DAACS) (TC 2.A.23) family.

It localises to the cell inner membrane. The catalysed reaction is L-serine(in) + Na(+)(in) = L-serine(out) + Na(+)(out). It carries out the reaction L-threonine(in) + Na(+)(in) = L-threonine(out) + Na(+)(out). Involved in the import of serine and threonine into the cell, with the concomitant import of sodium (symport system). This chain is Serine/threonine transporter SstT, found in Mannheimia succiniciproducens (strain KCTC 0769BP / MBEL55E).